The primary structure comprises 103 residues: Cell division protein FtsB (103 aa).

Over 1 to 3 the chain is Cytoplasmic; it reads MGK. Residues 4–21 form a helical membrane-spanning segment; that stretch reads LTLLLLAILVWLQYSLWF. Residues 22–103 are Periplasmic-facing; that stretch reads GKNGIHDYTR…RAQSAGQNNR (82 aa). Positions 31 to 71 form a coiled coil; sequence RVNNDVAAQQATNAKLKARNDQLFAEIDDLNGGQEALEERA.

The protein belongs to the FtsB family. In terms of assembly, part of a complex composed of FtsB, FtsL and FtsQ.

Its subcellular location is the cell inner membrane. Functionally, essential cell division protein. May link together the upstream cell division proteins, which are predominantly cytoplasmic, with the downstream cell division proteins, which are predominantly periplasmic. This is Cell division protein FtsB from Escherichia coli O81 (strain ED1a).